The sequence spans 651 residues: Beta-glucuronidase (651 aa).

The first 22 residues, 1-22, serve as a signal peptide directing secretion; the sequence is MLRGPAAVWAALGPLLWACGLA. N172 and N419 each carry an N-linked (GlcNAc...) asparagine glycan. E450 functions as the Proton donor in the catalytic mechanism. The N-linked (GlcNAc...) asparagine glycan is linked to N630.

This sequence belongs to the glycosyl hydrolase 2 family. Homotetramer.

The protein localises to the lysosome. It catalyses the reaction a beta-D-glucuronoside + H2O = D-glucuronate + an alcohol. Its activity is regulated as follows. Inhibited by L-aspartic acid. In terms of biological role, plays an important role in the degradation of dermatan and keratan sulfates. The protein is Beta-glucuronidase (GUSB) of Felis catus (Cat).